The sequence spans 332 residues: Nucleoid-associated protein VIBHAR_03026 (332 aa).

The protein belongs to the YejK family.

The protein localises to the cytoplasm. It localises to the nucleoid. The chain is Nucleoid-associated protein VIBHAR_03026 from Vibrio campbellii (strain ATCC BAA-1116).